The chain runs to 416 residues: Phosphatidylinositol 5-phosphate 4-kinase type-2 beta (416 aa).

Serine 2 carries the post-translational modification N-acetylserine. Threonine 8 carries the post-translational modification Phosphothreonine. Phosphoserine is present on serine 19. A PIPK domain is found at 38-415; it reads ASEPILSVLM…RFNEFMSNIL (378 aa). Residues 64 to 70 form a required for interaction with PIP5K1A region; that stretch reads VMLMPDD. N6-acetyllysine occurs at positions 94 and 150. ATP is bound by residues 202–204 and lysine 214; that span reads RNV. Residues 203 to 204 and lysine 214 each bind GTP; that span reads NV. Threonine 322 is subject to Phosphothreonine. The residue at position 326 (serine 326) is a Phosphoserine. A GTP-binding site is contributed by aspartate 369.

As to quaternary structure, homodimer. Binds TNFRSF1A. Interacts with PIP4K2A; the interaction suppresses ubiquitination by the SPOP/CUL3 complex. Post-translationally, ubiquitinated by the SPOP/CUL3 complex. Ubiquitination is stimulated by PtdIns5P levels. Phosphorylated on serine residues. In terms of tissue distribution, highly expressed in brain, heart, pancreas, skeletal muscle and kidney. Detected at lower levels in placenta, lung and liver.

The protein localises to the endoplasmic reticulum membrane. It localises to the cell membrane. It is found in the nucleus. Its subcellular location is the cytoplasm. The enzyme catalyses a 1,2-diacyl-sn-glycero-3-phospho-(1D-myo-inositol-5-phosphate) + ATP = a 1,2-diacyl-sn-glycero-3-phospho-(1D-myo-inositol-4,5-bisphosphate) + ADP + H(+). The catalysed reaction is 1,2-dihexadecanoyl-sn-glycero-3-phospho-(1D-myo-inositol-5-phosphate) + ATP = 1,2-dihexadecanoyl-sn-glycero-3-phospho-(1D-myo-inositol-4,5-bisphosphate) + ADP + H(+). It carries out the reaction 1,2-dihexadecanoyl-sn-glycero-3-phospho-(1D-myo-inositol-5-phosphate) + GTP = 1,2-dihexadecanoyl-sn-glycero-3-phospho-(1D-myo-inositol-4,5-bisphosphate) + GDP + H(+). Functionally, participates in the biosynthesis of phosphatidylinositol 4,5-bisphosphate. Preferentially utilizes GTP, rather than ATP, for PI(5)P phosphorylation and its activity reflects changes in direct proportion to the physiological GTP concentration. Its GTP-sensing activity is critical for metabolic adaptation. PIP4Ks negatively regulate insulin signaling through a catalytic-independent mechanism. They interact with PIP5Ks and suppress PIP5K-mediated PtdIns(4,5)P2 synthesis and insulin-dependent conversion to PtdIns(3,4,5)P3. The protein is Phosphatidylinositol 5-phosphate 4-kinase type-2 beta of Homo sapiens (Human).